Consider the following 408-residue polypeptide: Imidazolonepropionase (408 aa).

Fe(3+) contacts are provided by His73 and His75. Zn(2+) is bound by residues His73 and His75. 3 residues coordinate 4-imidazolone-5-propanoate: Arg82, Tyr145, and His178. Tyr145 contacts N-formimidoyl-L-glutamate. His243 contributes to the Fe(3+) binding site. His243 contacts Zn(2+). Position 246 (Gln246) interacts with 4-imidazolone-5-propanoate. Residue Asp318 coordinates Fe(3+). Asp318 contacts Zn(2+). N-formimidoyl-L-glutamate-binding residues include Asn320 and Gly322. A 4-imidazolone-5-propanoate-binding site is contributed by Ser323.

It belongs to the metallo-dependent hydrolases superfamily. HutI family. Zn(2+) serves as cofactor. Requires Fe(3+) as cofactor.

The protein resides in the cytoplasm. It catalyses the reaction 4-imidazolone-5-propanoate + H2O = N-formimidoyl-L-glutamate. The protein operates within amino-acid degradation; L-histidine degradation into L-glutamate; N-formimidoyl-L-glutamate from L-histidine: step 3/3. In terms of biological role, catalyzes the hydrolytic cleavage of the carbon-nitrogen bond in imidazolone-5-propanoate to yield N-formimidoyl-L-glutamate. It is the third step in the universal histidine degradation pathway. This chain is Imidazolonepropionase, found in Shewanella putrefaciens (strain CN-32 / ATCC BAA-453).